Here is a 406-residue protein sequence, read N- to C-terminus: Calreticulin (406 aa).

Residues 1–17 form the signal peptide; it reads MMWCKTVIVLLATVGFI. A disulfide bridge links Cys105 with Cys137. The an alpha-D-glucoside site is built by Tyr109, Lys111, Tyr128, and Asp135. A run of 7 repeats spans residues 191-202, 210-221, 227-238, 244-255, 259-269, 273-283, and 287-297. The interval 191–255 is 4 X approximate repeats; it reads VESGNLEDDW…DATKPEDWDD (65 aa). The segment covering 207-251 has biased composition (basic and acidic residues); sequence KIKDPTATKPEDWDDRATIPDPDDKKPEDWDKPEHIPDPDATKPE. Residues 207–259 are disordered; it reads KIKDPTATKPEDWDDRATIPDPDDKKPEDWDKPEHIPDPDATKPEDWDDEMDG. The tract at residues 259–297 is 3 X approximate repeats; the sequence is GEWEPPMIDNPEFKGEWQPKQLDNPNYKGAWEHPEIANP. Asp317 serves as a coordination point for an alpha-D-glucoside. Positions 347 to 406 are disordered; the sequence is KNTQAGEKKMKEAQDEVQRKKDEEEAKKASDKDDEDEDDDDEEKDDESKQDKDQSEHDEL. Residues 352–377 show a composition bias toward basic and acidic residues; sequence GEKKMKEAQDEVQRKKDEEEAKKASD. Over residues 378 to 391 the composition is skewed to acidic residues; that stretch reads KDDEDEDDDDEEKD. A compositionally biased stretch (basic and acidic residues) spans 392 to 406; it reads DESKQDKDQSEHDEL.

This sequence belongs to the calreticulin family.

The protein localises to the endoplasmic reticulum lumen. Functionally, molecular calcium-binding chaperone promoting folding, oligomeric assembly and quality control in the ER via the calreticulin/calnexin cycle. This lectin may interact transiently with almost all of the monoglucosylated glycoproteins that are synthesized in the ER. In Drosophila melanogaster (Fruit fly), this protein is Calreticulin.